The following is a 152-amino-acid chain: 3-dehydroquinate dehydratase (152 aa).

Residue Tyr-25 is the Proton acceptor of the active site. Asn-76, His-82, and Asp-89 together coordinate substrate. Catalysis depends on His-102, which acts as the Proton donor. Residues 103-104 (LS) and Arg-113 each bind substrate.

The protein belongs to the type-II 3-dehydroquinase family. In terms of assembly, homododecamer.

It carries out the reaction 3-dehydroquinate = 3-dehydroshikimate + H2O. The protein operates within metabolic intermediate biosynthesis; chorismate biosynthesis; chorismate from D-erythrose 4-phosphate and phosphoenolpyruvate: step 3/7. Its function is as follows. Catalyzes a trans-dehydration via an enolate intermediate. The chain is 3-dehydroquinate dehydratase from Gloeothece citriformis (strain PCC 7424) (Cyanothece sp. (strain PCC 7424)).